We begin with the raw amino-acid sequence, 472 residues long: Eukaryotic translation initiation factor 2 subunit 3 (472 aa).

Ala2 carries the N-acetylalanine; partial modification. The 209-residue stretch at 39–247 folds into the tr-type G domain; it reads QATINIGTIG…YIVKKIPVPL (209 aa). Positions 48 to 55 are G1; sequence GHVAHGKS. 51-56 is a binding site for GTP; that stretch reads AHGKST. The tract at residues 76–80 is G2; sequence NITIK. A G3 region spans residues 134-137; that stretch reads DCPG. Residues 190–193 and 225–227 each bind GTP; these read NKID and SAQ. Positions 190-193 are G4; that stretch reads NKID. The G5 stretch occupies residues 225-227; the sequence is SAQ. The interacts with CDC123 stretch occupies residues 457–469; sequence GQIRRGVTIKPTV.

Belongs to the TRAFAC class translation factor GTPase superfamily. Classic translation factor GTPase family. EIF2G subfamily. Eukaryotic translation initiation factor 2 eIF2 is a heterotrimeric complex composed of an alpha (EIF2S1), a beta (EIF2S2) and a gamma (EIF2S3) chain. eIF2 is member of the 43S pre-initiation complex (43S PIC).

The protein localises to the cytoplasm. The protein resides in the cytosol. It carries out the reaction GTP + H2O = GDP + phosphate + H(+). Member of the eIF2 complex that functions in the early steps of protein synthesis by forming a ternary complex with GTP and initiator tRNA. This complex binds to a 40S ribosomal subunit, followed by mRNA binding to form the 43S pre-initiation complex (43S PIC). Junction of the 60S ribosomal subunit to form the 80S initiation complex is preceded by hydrolysis of the GTP bound to eIF2 and release of an eIF2-GDP binary complex. In order for eIF2 to recycle and catalyze another round of initiation, the GDP bound to eIF2 must exchange with GTP by way of a reaction catalyzed by eIF-2B. The chain is Eukaryotic translation initiation factor 2 subunit 3 (EIF2S3) from Gallus gallus (Chicken).